We begin with the raw amino-acid sequence, 376 residues long: Chorismate synthase (376 aa).

NADP(+)-binding residues include Arg39 and Arg45. FMN is bound by residues 115 to 117 (RSS), Gly276, 291 to 295 (KPIPT), and Arg317.

It belongs to the chorismate synthase family. As to quaternary structure, homotetramer. It depends on FMNH2 as a cofactor.

The enzyme catalyses 5-O-(1-carboxyvinyl)-3-phosphoshikimate = chorismate + phosphate. Its pathway is metabolic intermediate biosynthesis; chorismate biosynthesis; chorismate from D-erythrose 4-phosphate and phosphoenolpyruvate: step 7/7. Catalyzes the anti-1,4-elimination of the C-3 phosphate and the C-6 proR hydrogen from 5-enolpyruvylshikimate-3-phosphate (EPSP) to yield chorismate, which is the branch point compound that serves as the starting substrate for the three terminal pathways of aromatic amino acid biosynthesis. This reaction introduces a second double bond into the aromatic ring system. This chain is Chorismate synthase, found in Thermotoga sp. (strain RQ2).